A 265-amino-acid chain; its full sequence is Mlc titration factor A (265 aa).

4 residues coordinate Zn(2+): His-111, His-148, His-152, and Glu-211.

Belongs to the MtfA family. Interacts with Mlc. Requires Zn(2+) as cofactor.

The protein resides in the cytoplasm. In terms of biological role, involved in the modulation of the activity of the glucose-phosphotransferase system (glucose-PTS). Interacts with the transcriptional repressor Mlc, preventing its interaction with DNA and leading to the modulation of expression of genes regulated by Mlc, including ptsG, which encodes the PTS system glucose-specific EIICB component. Its function is as follows. Shows zinc-dependent metallopeptidase activity. This Escherichia coli O9:H4 (strain HS) protein is Mlc titration factor A.